A 168-amino-acid chain; its full sequence is Prespore-specific protein A (168 aa).

The N-terminal stretch at 1-19 is a signal peptide; the sequence is MKFQHTFIALLSLLTYANA. O-linked (GlcNAc) threonine glycans are attached at residues Thr110, Thr114, Thr116, Thr118, Thr120, Thr122, Thr124, Thr126, Thr128, Thr130, Thr132, Thr134, and Thr138. A run of 3 repeats spans residues 116 to 119, 120 to 123, and 124 to 127. Positions 116–127 are 3 X 4 AA tandem repeats of T-P-T-V; sequence TPTVTPTVTPTV. The segment covering 116–131 has biased composition (low complexity); it reads TPTVTPTVTPTVTPTP. The interval 116 to 147 is disordered; it reads TPTVTPTVTPTVTPTPTNTPNPTPSQTSTTTG. A glycan (O-linked (GlcNAc) serine) is linked at Ser140. Gly147 carries GPI-like-anchor amidated glycine lipidation. Positions 148 to 168 are cleaved as a propeptide — removed in mature form; the sequence is SASTVVASLSLIIFSMILSLC.

The protein belongs to the ponticulin family. Post-translationally, O-glycosylated in the repeat region. The oligosaccharides contain N-acetylglucosamine and fucose as the major constituents. The GPI-like-anchor contains a phosphoceramide group, rather than a phosphatidyl group.

The protein localises to the cell membrane. Functionally, may bind F-actin and nucleates actin assembly. This is Prespore-specific protein A (pspA) from Dictyostelium discoideum (Social amoeba).